A 220-amino-acid polypeptide reads, in one-letter code: Ribose-5-phosphate isomerase A (220 aa).

Residues 25-28 (TGST), 80-83 (DGAD), and 93-96 (KGGG) contribute to the substrate site. Glutamate 102 functions as the Proton acceptor in the catalytic mechanism. Residue lysine 120 participates in substrate binding.

It belongs to the ribose 5-phosphate isomerase family. Homodimer.

It carries out the reaction aldehydo-D-ribose 5-phosphate = D-ribulose 5-phosphate. The protein operates within carbohydrate degradation; pentose phosphate pathway; D-ribose 5-phosphate from D-ribulose 5-phosphate (non-oxidative stage): step 1/1. Its function is as follows. Catalyzes the reversible conversion of ribose-5-phosphate to ribulose 5-phosphate. This is Ribose-5-phosphate isomerase A from Bacillus cereus (strain ZK / E33L).